The sequence spans 372 residues: MKPFPRAEISRYALQSNLAQLRLIAPNSKIMAVVKANGYGHGLLNVAECVGLLNYVESVCKYHGGADGFGLARLEEALQLREGGVKGKLLLLEGFFRQSDLPTLVSHNIDTVVHHESQLQMLETIALDKPVTVWIKIDTGMHRIGFSLEQFNSIYQRLLACPQVAKPIHLMTHFACADEPDNPLTQTQMNAFEQQVSGLEGDRTLANSAGTLFWPTSQADWVRPGIALYGVSPVVGDRGVNHRLIPAMELVSNLIAVREHKAGDSVGYGASWTAKKDTRLGVVAIGYGDGYPRNAPEGTPVWINGRRVPIVGRVSMDMLTVDLGADAQDNVGDSVQLWGKALAVEEVAEHIGTIAYELVTKLTPRVVVELLD.

Lys35 serves as the catalytic Proton acceptor; specific for D-alanine. Lys35 carries the N6-(pyridoxal phosphate)lysine modification. Arg143 provides a ligand contact to substrate. The active-site Proton acceptor; specific for L-alanine is Tyr268. Met316 lines the substrate pocket.

The protein belongs to the alanine racemase family. The cofactor is pyridoxal 5'-phosphate.

The catalysed reaction is L-alanine = D-alanine. It functions in the pathway amino-acid biosynthesis; D-alanine biosynthesis; D-alanine from L-alanine: step 1/1. Its function is as follows. Catalyzes the interconversion of L-alanine and D-alanine. May also act on other amino acids. The polypeptide is Alanine racemase (alr) (Shewanella frigidimarina (strain NCIMB 400)).